The chain runs to 129 residues: Glycine cleavage system H protein (129 aa).

Residues 24 to 106 form the Lipoyl-binding domain; that stretch reads SYTVGISEHA…FGDGWFFRVM (83 aa). Lys-65 carries the post-translational modification N6-lipoyllysine.

This sequence belongs to the GcvH family. In terms of assembly, the glycine cleavage system is composed of four proteins: P, T, L and H. (R)-lipoate serves as cofactor.

Functionally, the glycine cleavage system catalyzes the degradation of glycine. The H protein shuttles the methylamine group of glycine from the P protein to the T protein. In Shewanella woodyi (strain ATCC 51908 / MS32), this protein is Glycine cleavage system H protein.